Here is a 557-residue protein sequence, read N- to C-terminus: Coiled-coil domain-containing protein 22 homolog (557 aa).

Coiled coils occupy residues Arg260–Gln350 and Glu489–Asn554.

The protein belongs to the CCDC22 family.

This chain is Coiled-coil domain-containing protein 22 homolog, found in Anopheles gambiae (African malaria mosquito).